We begin with the raw amino-acid sequence, 98 residues long: NADH-ubiquinone oxidoreductase chain 4L (98 aa).

Transmembrane regions (helical) follow at residues 2–22, 29–49, and 61–81; these read LSISININLAFAAALLGMLMF, SLLCLEGMMLSMFILSTLIIL, and ILLLVFAACEAAIGLALLVMV.

The protein belongs to the complex I subunit 4L family. In terms of assembly, core subunit of respiratory chain NADH dehydrogenase (Complex I) which is composed of 45 different subunits.

Its subcellular location is the mitochondrion inner membrane. It carries out the reaction a ubiquinone + NADH + 5 H(+)(in) = a ubiquinol + NAD(+) + 4 H(+)(out). Core subunit of the mitochondrial membrane respiratory chain NADH dehydrogenase (Complex I) which catalyzes electron transfer from NADH through the respiratory chain, using ubiquinone as an electron acceptor. Part of the enzyme membrane arm which is embedded in the lipid bilayer and involved in proton translocation. The protein is NADH-ubiquinone oxidoreductase chain 4L (MT-ND4L) of Microcebus ravelobensis (Golden-brown mouse lemur).